The chain runs to 573 residues: DNA ligase (573 aa).

E250 is an ATP binding site. K252 acts as the N6-AMP-lysine intermediate in catalysis. Residues R257, R272, E301, F342, R432, and K438 each coordinate ATP.

Belongs to the ATP-dependent DNA ligase family. It depends on Mg(2+) as a cofactor.

It carries out the reaction ATP + (deoxyribonucleotide)n-3'-hydroxyl + 5'-phospho-(deoxyribonucleotide)m = (deoxyribonucleotide)n+m + AMP + diphosphate.. Its function is as follows. DNA ligase that seals nicks in double-stranded DNA during DNA replication, DNA recombination and DNA repair. The sequence is that of DNA ligase from Methanococcus maripaludis (strain C5 / ATCC BAA-1333).